We begin with the raw amino-acid sequence, 328 residues long: Acetaldehyde dehydrogenase 3 (328 aa).

17-20 (SGNI) is a binding site for NAD(+). Cysteine 135 (acyl-thioester intermediate) is an active-site residue. Residues 166–174 (SAGPGTRAN) and asparagine 298 each bind NAD(+).

This sequence belongs to the acetaldehyde dehydrogenase family.

The enzyme catalyses acetaldehyde + NAD(+) + CoA = acetyl-CoA + NADH + H(+). This is Acetaldehyde dehydrogenase 3 from Nocardia farcinica (strain IFM 10152).